Here is a 289-residue protein sequence, read N- to C-terminus: Phosphatidylserine decarboxylase proenzyme (289 aa).

Catalysis depends on charge relay system; for autoendoproteolytic cleavage activity residues aspartate 92, histidine 149, and serine 254. The Schiff-base intermediate with substrate; via pyruvic acid; for decarboxylase activity role is filled by serine 254. Serine 254 carries the pyruvic acid (Ser); by autocatalysis modification.

This sequence belongs to the phosphatidylserine decarboxylase family. PSD-B subfamily. Prokaryotic type I sub-subfamily. In terms of assembly, heterodimer of a large membrane-associated beta subunit and a small pyruvoyl-containing alpha subunit. Pyruvate serves as cofactor. Post-translationally, is synthesized initially as an inactive proenzyme. Formation of the active enzyme involves a self-maturation process in which the active site pyruvoyl group is generated from an internal serine residue via an autocatalytic post-translational modification. Two non-identical subunits are generated from the proenzyme in this reaction, and the pyruvate is formed at the N-terminus of the alpha chain, which is derived from the carboxyl end of the proenzyme. The autoendoproteolytic cleavage occurs by a canonical serine protease mechanism, in which the side chain hydroxyl group of the serine supplies its oxygen atom to form the C-terminus of the beta chain, while the remainder of the serine residue undergoes an oxidative deamination to produce ammonia and the pyruvoyl prosthetic group on the alpha chain. During this reaction, the Ser that is part of the protease active site of the proenzyme becomes the pyruvoyl prosthetic group, which constitutes an essential element of the active site of the mature decarboxylase.

Its subcellular location is the cell membrane. It catalyses the reaction a 1,2-diacyl-sn-glycero-3-phospho-L-serine + H(+) = a 1,2-diacyl-sn-glycero-3-phosphoethanolamine + CO2. Its pathway is phospholipid metabolism; phosphatidylethanolamine biosynthesis; phosphatidylethanolamine from CDP-diacylglycerol: step 2/2. Catalyzes the formation of phosphatidylethanolamine (PtdEtn) from phosphatidylserine (PtdSer). The protein is Phosphatidylserine decarboxylase proenzyme of Pseudomonas aeruginosa (strain UCBPP-PA14).